We begin with the raw amino-acid sequence, 157 residues long: Protein Smg (157 aa).

The protein belongs to the Smg family.

This is Protein Smg from Escherichia coli O7:K1 (strain IAI39 / ExPEC).